The chain runs to 476 residues: Glutamyl-tRNA(Gln) amidotransferase subunit A (476 aa).

Catalysis depends on charge relay system residues Lys69 and Ser144. The active-site Acyl-ester intermediate is Ser168.

It belongs to the amidase family. GatA subfamily. Heterotrimer of A, B and C subunits.

It catalyses the reaction L-glutamyl-tRNA(Gln) + L-glutamine + ATP + H2O = L-glutaminyl-tRNA(Gln) + L-glutamate + ADP + phosphate + H(+). In terms of biological role, allows the formation of correctly charged Gln-tRNA(Gln) through the transamidation of misacylated Glu-tRNA(Gln) in organisms which lack glutaminyl-tRNA synthetase. The reaction takes place in the presence of glutamine and ATP through an activated gamma-phospho-Glu-tRNA(Gln). The protein is Glutamyl-tRNA(Gln) amidotransferase subunit A of Sulfolobus acidocaldarius (strain ATCC 33909 / DSM 639 / JCM 8929 / NBRC 15157 / NCIMB 11770).